A 327-amino-acid chain; its full sequence is Toluene-4-monooxygenase system, hydroxylase component subunit beta (327 aa).

The protein belongs to the TmoE/XamoE family. As to quaternary structure, the alkene monooxygenase multicomponent enzyme system is composed of an electron transfer component and a monooxygenase component interacting with the effector protein TmoD. The electron transfer component is composed of a ferredoxin reductase (TmoF) and a ferredoxin (TmoC), and the monooxygenase component is formed by a heterohexamer (dimer of heterotrimers) of two alpha subunits (TmoA), two beta subunits (TmoE) and two gamma subunits (TmoB).

The enzyme catalyses toluene + NADH + O2 + H(+) = 4-methylphenol + NAD(+) + H2O. It participates in xenobiotic degradation; toluene degradation. Inhibited by Zn(2+) and Cu(2+). Its function is as follows. Component of the toluene-4-monooxygenase multicomponent enzyme system which catalyzes the O2- and NADH-dependent hydroxylation of toluene to form p-cresol. Also able to convert benzene to phenol, catechol, and 1,2,3-trihydroxybenzene by successive hydroxylations. This chain is Toluene-4-monooxygenase system, hydroxylase component subunit beta, found in Ectopseudomonas mendocina (Pseudomonas mendocina).